The primary structure comprises 199 residues: Interleukin-11 (199 aa).

The signal sequence occupies residues 1 to 21 (MNCVCRLVLVVLSLWPDRVVA). Positions 182–190 (HLTLDWAVR) are important for interaction with IL11RA and for the stimulation of cell proliferation.

Belongs to the IL-6 superfamily. Interacts with either IL11RA1 or IL11RA2 to associate with IL6ST, giving rise to a multimeric signaling complex.

The protein localises to the secreted. Its function is as follows. Cytokine that stimulates the proliferation of hematopoietic stem cells and megakaryocyte progenitor cells and induces megakaryocyte maturation resulting in increased platelet production. Also promotes the proliferation of hepatocytes in response to liver damage. Binding to its receptor formed by IL6ST and either IL11RA1 or IL11RA2 activates a signaling cascade that promotes cell proliferation, also in the context of various cancers. Signaling leads to the activation of intracellular protein kinases and the phosphorylation of STAT3. The interaction with the membrane-bound IL11RA and IL6ST stimulates 'classic signaling', whereas the binding of IL11 and soluble IL11RA to IL6ST stimulates 'trans-signaling'. This is Interleukin-11 from Mus musculus (Mouse).